Here is a 503-residue protein sequence, read N- to C-terminus: MRTINKILDKIGKVQKGKSLLWQLYPLLFREDLYAIAYNRSSSELSLKSMKHRDSSDRYSLVIIKRLINRIRNQTTSKLLFQGSDRKNLKINRSLFEGLTVLFEMIIPVESRPLVQYQSEWNSLQSIHSIFLFMEDRFFYSNSILGLKIPYYFHPEMIIRLFRRRIKDVFLLHLVRLLFHNYQNPFVPETSLFYSLKDSQKRLSILLRNHYFYEFENQLVPLWKRFVQLQSLSHRFLMDQTNPLYKMKHGLGSLQPFLSEINLLETPCIHYVRYENHSIIAFKGTKSIVNKWIKYLVGFWQYNYHYWLQPCQIDIRRPSRRCFSFMGYILGFRSRMIKVHTKRIDESSTTHCIIKEFCASIPTSSLIESLTREGFCDSSGRPVGRSTWTILKDDDILNKYHQIWGDLSCYYSGSFSRDGLWRAKYILQLSCAKTLAQKHKSTTRVVRNHFGLKFITTLNSVKNPFFIGSQEYSHRKNFWCLDIIRMNSLVNLINMKKESLSSS.

This sequence belongs to the intron maturase 2 family. MatK subfamily.

It localises to the plastid. It is found in the chloroplast. Usually encoded in the trnK tRNA gene intron. Probably assists in splicing its own and other chloroplast group II introns. This chain is Maturase K, found in Psilotum nudum (Whisk fern).